The following is a 185-amino-acid chain: GTP cyclohydrolase 1 (185 aa).

The Zn(2+) site is built by C75, H78, and C146.

It belongs to the GTP cyclohydrolase I family. Toroid-shaped homodecamer, composed of two pentamers of five dimers.

It catalyses the reaction GTP + H2O = 7,8-dihydroneopterin 3'-triphosphate + formate + H(+). Its pathway is cofactor biosynthesis; 7,8-dihydroneopterin triphosphate biosynthesis; 7,8-dihydroneopterin triphosphate from GTP: step 1/1. This chain is GTP cyclohydrolase 1, found in Alkalilimnicola ehrlichii (strain ATCC BAA-1101 / DSM 17681 / MLHE-1).